The sequence spans 347 residues: Cytosolic sulfotransferase 14 (347 aa).

87–92 is a 3'-phosphoadenylyl sulfate binding site; the sequence is KSGTTW. Histidine 155 acts as the Proton acceptor in catalysis. Residues arginine 177, serine 185, tyrosine 244, and 310–312 contribute to the 3'-phosphoadenylyl sulfate site; that span reads RKG.

It belongs to the sulfotransferase 1 family.

The protein resides in the cytoplasm. Sulfotransferase that utilizes 3'-phospho-5'-adenylyl sulfate (PAPS) as sulfonate donor. Not active with 11-hydroxyjasmonate or 12-hydroxyjasmonate. This Arabidopsis thaliana (Mouse-ear cress) protein is Cytosolic sulfotransferase 14 (SOT14).